The following is an 812-amino-acid chain: Phosphoenolpyruvate synthase (812 aa).

The active-site Tele-phosphohistidine intermediate is the His-430. Substrate contacts are provided by Arg-520, Arg-588, Glu-690, Gly-711, Ser-712, Asn-713, and Asp-714. Glu-690 serves as a coordination point for Mg(2+). Mg(2+) is bound at residue Asp-714. Residue Cys-761 is the Proton donor of the active site.

This sequence belongs to the PEP-utilizing enzyme family. Requires Mg(2+) as cofactor.

The enzyme catalyses pyruvate + ATP + H2O = phosphoenolpyruvate + AMP + phosphate + 2 H(+). Its pathway is carbohydrate biosynthesis; gluconeogenesis. In terms of biological role, catalyzes the phosphorylation of pyruvate to phosphoenolpyruvate. This is Phosphoenolpyruvate synthase (ppsA) from Helicobacter pylori (strain ATCC 700392 / 26695) (Campylobacter pylori).